The chain runs to 320 residues: Ferrochelatase (320 aa).

2 residues coordinate Fe cation: His194 and Glu275.

This sequence belongs to the ferrochelatase family. As to quaternary structure, monomer.

The protein resides in the cytoplasm. The catalysed reaction is heme b + 2 H(+) = protoporphyrin IX + Fe(2+). The protein operates within porphyrin-containing compound metabolism; protoheme biosynthesis; protoheme from protoporphyrin-IX: step 1/1. Its function is as follows. Catalyzes the ferrous insertion into protoporphyrin IX. This Escherichia coli (strain 55989 / EAEC) protein is Ferrochelatase.